A 208-amino-acid chain; its full sequence is A-type ATP synthase subunit E (208 aa).

Positions 37 to 57 (DAEKTAEAEKNKILDNGKKQS) are disordered.

This sequence belongs to the V-ATPase E subunit family. In terms of assembly, has multiple subunits with at least A(3), B(3), C, D, E, F, H, I and proteolipid K(x).

Its subcellular location is the cell membrane. Functionally, component of the A-type ATP synthase that produces ATP from ADP in the presence of a proton gradient across the membrane. The chain is A-type ATP synthase subunit E from Methanobrevibacter smithii (strain ATCC 35061 / DSM 861 / OCM 144 / PS).